The sequence spans 479 residues: Ribosomal RNA small subunit methyltransferase F (479 aa).

S-adenosyl-L-methionine contacts are provided by residues 125–131, Glu149, Asp176, and Asp194; that span reads AAAPGSK. Cys247 (nucleophile) is an active-site residue.

The protein belongs to the class I-like SAM-binding methyltransferase superfamily. RsmB/NOP family.

Its subcellular location is the cytoplasm. It catalyses the reaction cytidine(1407) in 16S rRNA + S-adenosyl-L-methionine = 5-methylcytidine(1407) in 16S rRNA + S-adenosyl-L-homocysteine + H(+). Its function is as follows. Specifically methylates the cytosine at position 1407 (m5C1407) of 16S rRNA. The sequence is that of Ribosomal RNA small subunit methyltransferase F from Escherichia coli O157:H7 (strain EC4115 / EHEC).